Here is a 400-residue protein sequence, read N- to C-terminus: Serine/threonine transporter SstT (400 aa).

Helical transmembrane passes span 9 to 29 (LVTQIAIAVVIGIVLAAVWPA), 36 to 56 (ILGSLFISALKAVAPVLVFVL), 75 to 95 (VLVLYAVGTLAAATVGVVASM), 134 to 154 (ALLEANYIGILAWAIALGLAL), 175 to 195 (VIQLVIRLAPLGILGLVASTF), 209 to 229 (LLAVLLGCMLFVALVVNPLIV), 281 to 301 (IAIPLGATINMAGAAITISVL), 323 to 343 (VVASLCACGASGVAGGSLLLI), and 349 to 369 (LFGIGNDVAMQVVAIGFIIGI).

The protein belongs to the dicarboxylate/amino acid:cation symporter (DAACS) (TC 2.A.23) family.

It is found in the cell inner membrane. It carries out the reaction L-serine(in) + Na(+)(in) = L-serine(out) + Na(+)(out). The enzyme catalyses L-threonine(in) + Na(+)(in) = L-threonine(out) + Na(+)(out). Involved in the import of serine and threonine into the cell, with the concomitant import of sodium (symport system). The sequence is that of Serine/threonine transporter SstT from Acidovorax sp. (strain JS42).